Reading from the N-terminus, the 451-residue chain is Adenylyltransferase and sulfurtransferase MOCS3-1 (451 aa).

Residues 42–62 form a disordered region; the sequence is GEDSDEAEESSNDMPTPQTKL. Residues 43–52 are compositionally biased toward acidic residues; that stretch reads EDSDEAEESS. Threonine 60 carries the post-translational modification Phosphothreonine. Residues glycine 99, aspartate 120, 127–131, lysine 144, and 188–189 contribute to the ATP site; these read SNLHR and DN. Zn(2+) is bound by residues cysteine 229 and cysteine 232. Cysteine 246 acts as the Glycyl thioester intermediate; for adenylyltransferase activity in catalysis. Positions 304 and 307 each coordinate Zn(2+). The Rhodanese domain occupies 353–449; that stretch reads QSQPHLLLDV…WTGSVDATFP (97 aa). The active-site Cysteine persulfide intermediate; for sulfurtransferase activity is cysteine 408.

In the N-terminal section; belongs to the HesA/MoeB/ThiF family. UBA4 subfamily. Requires Zn(2+) as cofactor.

Its subcellular location is the cytoplasm. The catalysed reaction is [molybdopterin-synthase sulfur-carrier protein]-C-terminal Gly-Gly + ATP + H(+) = [molybdopterin-synthase sulfur-carrier protein]-C-terminal Gly-Gly-AMP + diphosphate. It carries out the reaction [molybdopterin-synthase sulfur-carrier protein]-C-terminal Gly-Gly-AMP + S-sulfanyl-L-cysteinyl-[cysteine desulfurase] + AH2 = [molybdopterin-synthase sulfur-carrier protein]-C-terminal-Gly-aminoethanethioate + L-cysteinyl-[cysteine desulfurase] + A + AMP + 2 H(+). It functions in the pathway tRNA modification; 5-methoxycarbonylmethyl-2-thiouridine-tRNA biosynthesis. It participates in cofactor biosynthesis; molybdopterin biosynthesis. Plays a central role in 2-thiolation of mcm(5)S(2)U at tRNA wobble positions of cytosolic tRNA(Lys), tRNA(Glu) and tRNA(Gln). Also essential during biosynthesis of the molybdenum cofactor. Acts by mediating the C-terminal thiocarboxylation of sulfur carriers URM1 and MOCS2A. Its N-terminus first activates URM1 and MOCS2A as acyl-adenylates (-COAMP), then the persulfide sulfur on the catalytic cysteine is transferred to URM1 and MOCS2A to form thiocarboxylation (-COSH) of their C-terminus. The reaction probably involves hydrogen sulfide that is generated from the persulfide intermediate and that acts as a nucleophile towards URM1 and MOCS2A. Subsequently, a transient disulfide bond is formed. Does not use thiosulfate as sulfur donor; NFS1 probably acting as a sulfur donor for thiocarboxylation reactions. This Drosophila pseudoobscura pseudoobscura (Fruit fly) protein is Adenylyltransferase and sulfurtransferase MOCS3-1.